Here is a 61-residue protein sequence, read N- to C-terminus: Small ribosomal subunit protein uS14 (61 aa).

Zn(2+) is bound by residues Cys24, Cys27, Cys40, and Cys43.

This sequence belongs to the universal ribosomal protein uS14 family. Zinc-binding uS14 subfamily. In terms of assembly, part of the 30S ribosomal subunit. Contacts proteins S3 and S10. Requires Zn(2+) as cofactor.

Functionally, binds 16S rRNA, required for the assembly of 30S particles and may also be responsible for determining the conformation of the 16S rRNA at the A site. This Campylobacter fetus subsp. fetus (strain 82-40) protein is Small ribosomal subunit protein uS14.